A 960-amino-acid chain; its full sequence is Serine/threonine-protein kinase atg1 (960 aa).

Positions 22–327 (YTRLDEIGRG…FPEFFSNNVI (306 aa)) constitute a Protein kinase domain. ATP is bound by residues 28–36 (IGRGSFATV) and lysine 51. Aspartate 165 acts as the Proton acceptor in catalysis. 6 disordered regions span residues 333 to 467 (GLLA…RAQE), 503 to 538 (PRLQ…PHAN), 550 to 571 (ARAD…QSPT), 673 to 694 (SAST…SADS), 789 to 815 (RLPP…TADV), and 926 to 960 (AKRS…TPPR). Polar residues-rich tracts occupy residues 376–388 (PVTT…TPPT) and 520–536 (RRTT…SSPH). Basic and acidic residues predominate over residues 550–566 (ARADSTHQRQHSYERRY). A compositionally biased stretch (basic and acidic residues) spans 789-800 (RLPPDHPSHPDN). A compositionally biased stretch (low complexity) spans 801 to 815 (HSISSTAGSSSTADV). Positions 930-951 (SAPTPTAGSAGKTPTSNISPVT) are enriched in polar residues.

The protein belongs to the protein kinase superfamily. Ser/Thr protein kinase family. APG1/unc-51/ULK1 subfamily. In terms of assembly, homodimer. Forms a ternary complex with ATG13 and ATG17.

The protein resides in the cytoplasm. It localises to the preautophagosomal structure membrane. It carries out the reaction L-seryl-[protein] + ATP = O-phospho-L-seryl-[protein] + ADP + H(+). It catalyses the reaction L-threonyl-[protein] + ATP = O-phospho-L-threonyl-[protein] + ADP + H(+). In terms of biological role, serine/threonine protein kinase involved in the cytoplasm to vacuole transport (Cvt) and found to be essential in autophagy, where it is required for the formation of autophagosomes. Involved in the clearance of protein aggregates which cannot be efficiently cleared by the proteasome. Required for selective autophagic degradation of the nucleus (nucleophagy) as well as for mitophagy which contributes to regulate mitochondrial quantity and quality by eliminating the mitochondria to a basal level to fulfill cellular energy requirements and preventing excess ROS production. Also involved in endoplasmic reticulum-specific autophagic process, in selective removal of ER-associated degradation (ERAD) substrates. Plays a key role in ATG9 and ATG23 cycling through the pre-autophagosomal structure and is necessary to promote ATG18 binding to ATG9 through phosphorylation of ATG9. Catalyzes phosphorylation of ATG4, decreasing the interaction between ATG4 and ATG8 and impairing deconjugation of PE-conjugated forms of ATG8. This Penicillium rubens (strain ATCC 28089 / DSM 1075 / NRRL 1951 / Wisconsin 54-1255) (Penicillium chrysogenum) protein is Serine/threonine-protein kinase atg1.